The primary structure comprises 330 residues: Malate dehydrogenase (330 aa).

NAD(+) is bound at residue 12-18 (GAAGQIG). Substrate is bound by residues Arg-93 and Arg-99. NAD(+) contacts are provided by residues Asn-106, Gln-113, and 130 to 132 (VGN). Residues Asn-132 and Arg-163 each coordinate substrate. The active-site Proton acceptor is His-188.

Belongs to the LDH/MDH superfamily. MDH type 2 family.

The catalysed reaction is (S)-malate + NAD(+) = oxaloacetate + NADH + H(+). Its function is as follows. Catalyzes the reversible oxidation of malate to oxaloacetate. The protein is Malate dehydrogenase of Thermobifida fusca (strain YX).